Here is a 134-residue protein sequence, read N- to C-terminus: uncharacterized protein (134 aa).

Transmembrane regions (helical) follow at residues 49-69 and 71-91; these read VAVP…SLDV and LSMT…LNKV.

Its subcellular location is the cell membrane. This is an uncharacterized protein from Mycobacterium tuberculosis (strain ATCC 25618 / H37Rv).